Consider the following 113-residue polypeptide: Ribosome-binding factor A (113 aa).

Belongs to the RbfA family. In terms of assembly, monomer. Binds 30S ribosomal subunits, but not 50S ribosomal subunits or 70S ribosomes.

It is found in the cytoplasm. One of several proteins that assist in the late maturation steps of the functional core of the 30S ribosomal subunit. Associates with free 30S ribosomal subunits (but not with 30S subunits that are part of 70S ribosomes or polysomes). Required for efficient processing of 16S rRNA. May interact with the 5'-terminal helix region of 16S rRNA. The polypeptide is Ribosome-binding factor A (Mycoplasmopsis agalactiae (strain NCTC 10123 / CIP 59.7 / PG2) (Mycoplasma agalactiae)).